Here is a 226-residue protein sequence, read N- to C-terminus: Transcription factor bHLH115 (226 aa).

The bHLH domain maps to Thr66 to Ala117.

As to quaternary structure, homodimer. Interacts with BTS and BHLH47/PYE.

It localises to the nucleus. In Arabidopsis thaliana (Mouse-ear cress), this protein is Transcription factor bHLH115 (BHLH115).